The primary structure comprises 308 residues: High-affinity branched-chain amino acid transport system permease protein LivH (308 aa).

Over 1-21 the chain is Cytoplasmic; the sequence is MSEQFLYFLQQMFNGVTLGST. A helical transmembrane segment spans residues 22-42; the sequence is YALIAIGYTMVYGIIGMINFA. Residues 43–45 are Periplasmic-facing; sequence HGE. Residues 46–66 traverse the membrane as a helical segment; the sequence is VYMIGSYVSFMIIAALMMMGI. Topologically, residues 67 to 68 are cytoplasmic; the sequence is DT. Residues 69–89 traverse the membrane as a helical segment; the sequence is GWLLVAAGFVGAIVIASAYGW. Residues 90–104 lie on the Periplasmic side of the membrane; sequence SIERVAYRPVRNSKR. Residues 105 to 125 traverse the membrane as a helical segment; that stretch reads LIALISAIGMSIFLQNYVSLT. Residues 126–154 lie on the Cytoplasmic side of the membrane; it reads EGSRDVALPSLFNGQWVVGHSENFSASIT. A helical transmembrane segment spans residues 155-175; that stretch reads TMQAVIWIVTFLAMLALTIFI. The Periplasmic segment spans residues 176 to 203; the sequence is RYSRMGRACRACAEDLKMASLLGINTDR. The helical transmembrane segment at 204 to 224 threads the bilayer; the sequence is VIALTFVIGAAMAAVAGVLLG. At 225-245 the chain is on the cytoplasmic side; the sequence is QFYGVINPYIGFMAGMKAFTA. Residues 246–266 form a helical membrane-spanning segment; that stretch reads AVLGGIGSIPGAMIGGLILGI. Over 267 to 280 the chain is Periplasmic; sequence AEALSSAYLSTEYK. A helical transmembrane segment spans residues 281 to 301; sequence DVVSFALLILVLLVMPTGILG. The Cytoplasmic segment spans residues 302-308; it reads RPEVEKV.

The protein belongs to the binding-protein-dependent transport system permease family. LivHM subfamily.

Its subcellular location is the cell inner membrane. Its function is as follows. Part of the binding-protein-dependent transport system for branched-chain amino acids. Probably responsible for the translocation of the substrates across the membrane. This chain is High-affinity branched-chain amino acid transport system permease protein LivH (livH), found in Escherichia coli O157:H7.